A 618-amino-acid polypeptide reads, in one-letter code: MAKEKEKLFSEFPPVSREAWIDKITADLKGVPFEKKLVWRTNEGFNVNPFYRREDIEDLKTTTSLPDEYPYVRSTRMHNEWLVRQDIVVGDNVAEANEKALDLLNKGVDSLGFYLKKVHINVDTLAALLKDIELTAVELNFNCCITRAADLLSAFSAYVKKVGADPNKCHGSVSYDPFKKQLVRGVSNPDWVKMTLPVMDAARELPAFRVLNVNAVNLSDAGAFITQELGYALAWGAELLDKLTDAGYKPEEIASRIKFNFGIGSNYFMEIAKFRAARWLWAQIVGSYGDQYKNETAKIHQHATTSMWNKTVFDAHVNLLRTQTETMSAAIAGVDSITVLPFDVTYQQSDDFSERIARNQQLLLKEECHFDKVIDPSAGSYYIETLTNSIGEEAWKLFLSVEDAGGFTQAAETASIQKAVNASNIKRHQSVATRREIFLGTNQFPNFTEVAGDKITLAQGEHDCNCVKSIEPLNFSRGASEFEALRLATEKSGKTPVVFMLTIGNLAMRLARSQFSSNFFGCAGYKLIDNLGFKSVEEGVDAALAAKADIVVLCSSDDEYAEYAPAAFDYLAGRAEFVVAGAPACMADLEAKGIRNYVHVKSNVLETLRAFNDKFGIR.

It belongs to the methylmalonyl-CoA mutase family. In terms of assembly, heterodimer of an alpha and a beta chain. Adenosylcob(III)alamin is required as a cofactor.

The catalysed reaction is (R)-methylmalonyl-CoA = succinyl-CoA. It participates in metabolic intermediate metabolism; propanoyl-CoA degradation; succinyl-CoA from propanoyl-CoA: step 3/3. Its function is as follows. Catalyzes the isomerization of succinyl-CoA to methylmalonyl-CoA during synthesis of propionate from tricarboxylic acid-cycle intermediates. The chain is Methylmalonyl-CoA mutase small subunit (mutA) from Porphyromonas gingivalis (strain ATCC BAA-308 / W83).